The following is a 388-amino-acid chain: uncharacterized protein (388 aa).

It localises to the mitochondrion. This is an uncharacterized protein from Dictyostelium citrinum (Slime mold).